A 430-amino-acid polypeptide reads, in one-letter code: FAD-dependent monooxygenase asL4 (430 aa).

Residues Gly-11–Ala-14, Glu-33–Arg-34, Arg-108, and Tyr-278 contribute to the FAD site.

The protein belongs to the aromatic-ring hydroxylase family. The cofactor is FAD.

It participates in secondary metabolite biosynthesis; terpenoid biosynthesis. Its function is as follows. Flavin-dependent monooxygenase; part of the gene cluster that mediates the biosynthesis of xenovulene A, an unusual meroterpenoid that has potent inhibitory effects on the human gamma-aminobutyrate A (GABAA) benzodiazepine receptor. The first step of xenovulene A biosynthesis is the biosynthesis of 3-methylorcinaldehyde performed by the non-reducing polyketide synthase aspks1. The salicylate hydroxylase asL1 then catalyzes the oxidative dearomatization of 3-methylorcinaldehyde to yield a dearomatized hydroxycyclohexadione. The 2-oxoglutarate-dependent dioxygenase asL3 further catalyzes the oxidative ring expansion to provide the first tropolone metabolite. The cytochrome P450 monooxygenase asR2 allows the synthesis of tropolone hemiacetal. In parallel, a previously unrecognised class of terpene cyclase, asR6, produces alpha-humulene from farnesylpyrophosphate (FPP). The putative Diels-Alderase asR5 probably catalyzes the formation of the tropolone-humulene skeleton by linking humulene and the polyketide moiety. Oxidative-ring contractions catalyzed by asL4 and asL6 then processively remove carbon atoms from the polyketide to yield xenovulene A. The sequence is that of FAD-dependent monooxygenase asL4 from Sarocladium schorii (Acremonium strictum (strain IMI 501407)).